A 177-amino-acid chain; its full sequence is Large ribosomal subunit protein uL6 (177 aa).

The protein belongs to the universal ribosomal protein uL6 family. Part of the 50S ribosomal subunit.

This protein binds to the 23S rRNA, and is important in its secondary structure. It is located near the subunit interface in the base of the L7/L12 stalk, and near the tRNA binding site of the peptidyltransferase center. This Saccharophagus degradans (strain 2-40 / ATCC 43961 / DSM 17024) protein is Large ribosomal subunit protein uL6.